A 33-amino-acid polypeptide reads, in one-letter code: Dermaseptin-H8 (33 aa).

Leu-33 is modified (leucine amide).

Expressed by the skin glands.

It localises to the secreted. Functionally, has antimicrobial activity. This Pithecopus hypochondrialis (Orange-legged leaf frog) protein is Dermaseptin-H8.